We begin with the raw amino-acid sequence, 378 residues long: Deoxyhypusine synthase (378 aa).

Residues 107-111 (SNLIS), 133-135 (SAG), glutamate 139, and aspartate 253 each bind NAD(+). 138–139 (EE) serves as a coordination point for spermidine. Aspartate 258 contributes to the spermidine binding site. Residue glycine 300 participates in NAD(+) binding. A spermidine-binding site is contributed by histidine 305. 325 to 326 (TG) contributes to the NAD(+) binding site. Spermidine contacts are provided by residues 331–333 (GSD) and 340–346 (EAISWGK). Lysine 346 serves as the catalytic Nucleophile. An NAD(+)-binding site is contributed by 359 to 360 (DA).

The protein belongs to the deoxyhypusine synthase family. NAD(+) is required as a cofactor.

The enzyme catalyses [eIF5A protein]-L-lysine + spermidine = [eIF5A protein]-deoxyhypusine + propane-1,3-diamine. It participates in protein modification; eIF5A hypusination. Functionally, catalyzes the NAD-dependent oxidative cleavage of spermidine and the subsequent transfer of the butylamine moiety of spermidine to the epsilon-amino group of a specific lysine residue of the eIF-5A precursor protein to form the intermediate deoxyhypusine residue. The polypeptide is Deoxyhypusine synthase (DYS1) (Debaryomyces hansenii (strain ATCC 36239 / CBS 767 / BCRC 21394 / JCM 1990 / NBRC 0083 / IGC 2968) (Yeast)).